The chain runs to 409 residues: Argininosuccinate synthase (409 aa).

ATP contacts are provided by residues 10–18 (AYSGGLDTS) and A37. L-citrulline contacts are provided by Y90 and S95. Position 120 (G120) interacts with ATP. L-aspartate is bound by residues T122, N126, and D127. Position 126 (N126) interacts with L-citrulline. 5 residues coordinate L-citrulline: R130, S182, S191, E267, and Y279.

It belongs to the argininosuccinate synthase family. Type 1 subfamily. In terms of assembly, homotetramer.

The protein resides in the cytoplasm. The enzyme catalyses L-citrulline + L-aspartate + ATP = 2-(N(omega)-L-arginino)succinate + AMP + diphosphate + H(+). Its pathway is amino-acid biosynthesis; L-arginine biosynthesis; L-arginine from L-ornithine and carbamoyl phosphate: step 2/3. The sequence is that of Argininosuccinate synthase from Aromatoleum aromaticum (strain DSM 19018 / LMG 30748 / EbN1) (Azoarcus sp. (strain EbN1)).